The chain runs to 518 residues: Zinc finger protein 449 (518 aa).

The region spanning 30-112 (RQRFRQFQYR…SLIEDLQREL (83 aa)) is the SCAN box domain. Positions 292–304 (NPTLGETPENSNL) are enriched in polar residues. A disordered region spans residues 292-325 (NPTLGETPENSNLEEPLNPKPHKKKSPGEKPHRC). 7 C2H2-type zinc fingers span residues 323 to 345 (HRCPQCGKCFARKSQLTGHQRIH), 351 to 373 (HKCPECGKRFLRSSDLYRHQRLH), 379 to 401 (YECTVCKKRFTRRSHLIGHQRTH), 407 to 429 (YKCLECGKSFCHGSSLKRHLKTH), 435 to 457 (HRCHNCGKSFSRLTALTLHQRTH), 463 to 485 (FKCNYCGKSFRQRPSLVIHLRIH), and 491 to 513 (YKCTHCSKSFRQRAGLIMHQVTH).

It belongs to the krueppel C2H2-type zinc-finger protein family.

It localises to the nucleus. Functionally, may be involved in transcriptional regulation. The polypeptide is Zinc finger protein 449 (ZNF449) (Gorilla gorilla gorilla (Western lowland gorilla)).